Here is a 78-residue protein sequence, read N- to C-terminus: DNA-directed RNA polymerase subunit Rpo5 (78 aa).

The protein belongs to the archaeal Rpo5/eukaryotic RPB5 RNA polymerase subunit family. Part of the RNA polymerase complex.

The protein localises to the cytoplasm. The enzyme catalyses RNA(n) + a ribonucleoside 5'-triphosphate = RNA(n+1) + diphosphate. Its function is as follows. DNA-dependent RNA polymerase (RNAP) catalyzes the transcription of DNA into RNA using the four ribonucleoside triphosphates as substrates. The sequence is that of DNA-directed RNA polymerase subunit Rpo5 from Methanocaldococcus jannaschii (strain ATCC 43067 / DSM 2661 / JAL-1 / JCM 10045 / NBRC 100440) (Methanococcus jannaschii).